A 278-amino-acid polypeptide reads, in one-letter code: Nucleotide-binding protein LHK_02029 (278 aa).

Residue 8–15 (GLAGSGKS) coordinates ATP. 57-60 (DTRD) contacts GTP.

The protein belongs to the RapZ-like family.

Displays ATPase and GTPase activities. The sequence is that of Nucleotide-binding protein LHK_02029 from Laribacter hongkongensis (strain HLHK9).